The sequence spans 259 residues: Imidazole glycerol phosphate synthase subunit HisF (259 aa).

Catalysis depends on residues Asp11 and Asp130.

The protein belongs to the HisA/HisF family. As to quaternary structure, heterodimer of HisH and HisF.

Its subcellular location is the cytoplasm. It carries out the reaction 5-[(5-phospho-1-deoxy-D-ribulos-1-ylimino)methylamino]-1-(5-phospho-beta-D-ribosyl)imidazole-4-carboxamide + L-glutamine = D-erythro-1-(imidazol-4-yl)glycerol 3-phosphate + 5-amino-1-(5-phospho-beta-D-ribosyl)imidazole-4-carboxamide + L-glutamate + H(+). It participates in amino-acid biosynthesis; L-histidine biosynthesis; L-histidine from 5-phospho-alpha-D-ribose 1-diphosphate: step 5/9. Functionally, IGPS catalyzes the conversion of PRFAR and glutamine to IGP, AICAR and glutamate. The HisF subunit catalyzes the cyclization activity that produces IGP and AICAR from PRFAR using the ammonia provided by the HisH subunit. The sequence is that of Imidazole glycerol phosphate synthase subunit HisF from Nitratidesulfovibrio vulgaris (strain DP4) (Desulfovibrio vulgaris).